The following is a 310-amino-acid chain: Putative S-adenosyl-L-methionine-dependent methyltransferase MUL_2766 (310 aa).

Residues Asp131 and Asp160–Leu161 contribute to the S-adenosyl-L-methionine site.

Belongs to the UPF0677 family.

Functionally, exhibits S-adenosyl-L-methionine-dependent methyltransferase activity. The sequence is that of Putative S-adenosyl-L-methionine-dependent methyltransferase MUL_2766 from Mycobacterium ulcerans (strain Agy99).